We begin with the raw amino-acid sequence, 375 residues long: Queuine tRNA-ribosyltransferase (375 aa).

The Proton acceptor role is filled by aspartate 94. Substrate contacts are provided by residues 94-98 (DSGGF), aspartate 148, glutamine 191, and glycine 218. The RNA binding stretch occupies residues 249–255 (GVGSPDD). Catalysis depends on aspartate 268, which acts as the Nucleophile. The interval 273–277 (TRIAR) is RNA binding; important for wobble base 34 recognition. Positions 306, 308, 311, and 337 each coordinate Zn(2+).

It belongs to the queuine tRNA-ribosyltransferase family. Homodimer. Within each dimer, one monomer is responsible for RNA recognition and catalysis, while the other monomer binds to the replacement base PreQ1. It depends on Zn(2+) as a cofactor.

It catalyses the reaction 7-aminomethyl-7-carbaguanine + guanosine(34) in tRNA = 7-aminomethyl-7-carbaguanosine(34) in tRNA + guanine. The protein operates within tRNA modification; tRNA-queuosine biosynthesis. Functionally, catalyzes the base-exchange of a guanine (G) residue with the queuine precursor 7-aminomethyl-7-deazaguanine (PreQ1) at position 34 (anticodon wobble position) in tRNAs with GU(N) anticodons (tRNA-Asp, -Asn, -His and -Tyr). Catalysis occurs through a double-displacement mechanism. The nucleophile active site attacks the C1' of nucleotide 34 to detach the guanine base from the RNA, forming a covalent enzyme-RNA intermediate. The proton acceptor active site deprotonates the incoming PreQ1, allowing a nucleophilic attack on the C1' of the ribose to form the product. After dissociation, two additional enzymatic reactions on the tRNA convert PreQ1 to queuine (Q), resulting in the hypermodified nucleoside queuosine (7-(((4,5-cis-dihydroxy-2-cyclopenten-1-yl)amino)methyl)-7-deazaguanosine). This chain is Queuine tRNA-ribosyltransferase, found in Thermoanaerobacter pseudethanolicus (strain ATCC 33223 / 39E) (Clostridium thermohydrosulfuricum).